Here is a 95-residue protein sequence, read N- to C-terminus: Protein TusB (95 aa).

This sequence belongs to the DsrH/TusB family. As to quaternary structure, heterohexamer, formed by a dimer of trimers. The hexameric TusBCD complex contains 2 copies each of TusB, TusC and TusD. The TusBCD complex interacts with TusE.

It localises to the cytoplasm. Part of a sulfur-relay system required for 2-thiolation of 5-methylaminomethyl-2-thiouridine (mnm(5)s(2)U) at tRNA wobble positions. The polypeptide is Protein TusB (Escherichia coli O157:H7).